A 107-amino-acid chain; its full sequence is Biphenyl 2,3-dioxygenase, ferredoxin component (107 aa).

The Rieske domain occupies 4–99; the sequence is TKICSSGDLA…VKLEGDDVLV (96 aa). 4 residues coordinate [2Fe-2S] cluster: Cys-43, His-45, Cys-62, and His-65.

Belongs to the bacterial ring-hydroxylating dioxygenase ferredoxin component family. In terms of assembly, the multicomponent biphenyl dioxygenase system is composed of a ferredoxin reductase (BphA4), a ferredoxin (BphA3), and a terminal oxygenase (BphA1A2). The cofactor is [2Fe-2S] cluster.

Its pathway is xenobiotic degradation; biphenyl degradation. Its function is as follows. Ferredoxin component of the biphenyl dioxygenase system that catalyzes the stereospecific dihydroxylation of the aromatic ring of biphenyl, yielding a dihydrodiol compound. Is likely involved in biphenyl degradation that allows growth of Rhodococcus sp. strain RHA1 on biphenyl as the sole source of carbon and energy. The dioxygenase system can also use naphtalene and 4-chlorobiphenyl (4-CB) as substrates, as well as some polychlorinated biphenyls (PCB) such as 2,2'-dichlorobiphenyl, 2,3-dichlorobiphenyl and 2,5,2'-trichlorobiphenyl. It exhibits weak activity toward dibenzofuran and dibenzo-p-dioxin. Electrons are transferred from NADH to the [2Fe-2S] cluster in BphA1 via FAD of BphA4 and [2Fe-2S] cluster of BphA3. This Rhodococcus jostii (strain RHA1) protein is Biphenyl 2,3-dioxygenase, ferredoxin component.